Reading from the N-terminus, the 211-residue chain is Large ribosomal subunit protein uL4 (211 aa).

Positions 40 to 80 (QQAHSRQGTASTLTRSEVRGGGRKPYKQKGTGRARQGSIRT) are disordered. The span at 41–54 (QAHSRQGTASTLTR) shows a compositional bias: polar residues. Residues 60-71 (GGRKPYKQKGTG) are compositionally biased toward basic residues.

The protein belongs to the universal ribosomal protein uL4 family. As to quaternary structure, part of the 50S ribosomal subunit.

Functionally, one of the primary rRNA binding proteins, this protein initially binds near the 5'-end of the 23S rRNA. It is important during the early stages of 50S assembly. It makes multiple contacts with different domains of the 23S rRNA in the assembled 50S subunit and ribosome. Forms part of the polypeptide exit tunnel. In Prochlorococcus marinus (strain MIT 9211), this protein is Large ribosomal subunit protein uL4.